A 184-amino-acid polypeptide reads, in one-letter code: Phosphorelay intermediate protein YPD1 (184 aa).

The HPt domain maps to 30 to 125; that stretch reads EEGFSKSLVE…SAENVAVNDG (96 aa). H69 carries the phosphohistidine modification. Positions 120–152 are disordered; that stretch reads VAVNDGETNPENGSNGNETSNNKTNTSNIPDES. Low complexity predominate over residues 125 to 147; it reads GETNPENGSNGNETSNNKTNTSN.

It belongs to the YPD1 family.

It localises to the cytoplasm. Its subcellular location is the nucleus. Its function is as follows. Phosphorelay intermediate protein that is part of the bifurcated SLN1-YPD1-SKN7/SSK1 two-component regulatory system, which controls activity of the HOG1 pathway and gene expression in response to oxidative stress and probably to changes in the osmolarity of the extracellular environment. Catalyzes the phosphoryl group transfer from the membrane-bound histidine kinase SLN1 to two distinct response regulators SSK1 and SKN7. This chain is Phosphorelay intermediate protein YPD1 (YPD1), found in Candida albicans (strain SC5314 / ATCC MYA-2876) (Yeast).